We begin with the raw amino-acid sequence, 274 residues long: Penicillin-insensitive murein endopeptidase (274 aa).

An N-terminal signal peptide occupies residues Met1–Ala19. Cystine bridges form between Cys44–Cys265, Cys187–Cys235, and Cys216–Cys223. Zn(2+) contacts are provided by His110, His113, Asp120, Asp147, His150, and His211. Positions Leu228–Ser264 are disordered.

The protein belongs to the peptidase M74 family. As to quaternary structure, dimer. It depends on Zn(2+) as a cofactor.

The protein resides in the periplasm. Its function is as follows. Murein endopeptidase that cleaves the D-alanyl-meso-2,6-diamino-pimelyl amide bond that connects peptidoglycan strands. Likely plays a role in the removal of murein from the sacculus. The polypeptide is Penicillin-insensitive murein endopeptidase (Escherichia coli (strain 55989 / EAEC)).